The primary structure comprises 547 residues: Chaperonin GroEL (547 aa).

ATP-binding positions include 30–33 (TLGP), Lys-51, 87–91 (DGTTT), Gly-415, 479–481 (NAA), and Asp-495.

The protein belongs to the chaperonin (HSP60) family. Forms a cylinder of 14 subunits composed of two heptameric rings stacked back-to-back. Interacts with the co-chaperonin GroES.

The protein resides in the cytoplasm. It catalyses the reaction ATP + H2O + a folded polypeptide = ADP + phosphate + an unfolded polypeptide.. Its function is as follows. Together with its co-chaperonin GroES, plays an essential role in assisting protein folding. The GroEL-GroES system forms a nano-cage that allows encapsulation of the non-native substrate proteins and provides a physical environment optimized to promote and accelerate protein folding. The protein is Chaperonin GroEL of Pseudomonas putida (strain GB-1).